A 909-amino-acid chain; its full sequence is Alanine--tRNA ligase (909 aa).

Positions 600, 604, 704, and 708 each coordinate Zn(2+).

The protein belongs to the class-II aminoacyl-tRNA synthetase family. It depends on Zn(2+) as a cofactor.

It is found in the cytoplasm. It catalyses the reaction tRNA(Ala) + L-alanine + ATP = L-alanyl-tRNA(Ala) + AMP + diphosphate. In terms of biological role, catalyzes the attachment of alanine to tRNA(Ala) in a two-step reaction: alanine is first activated by ATP to form Ala-AMP and then transferred to the acceptor end of tRNA(Ala). Also edits incorrectly charged Ser-tRNA(Ala) and Gly-tRNA(Ala) via its editing domain. This is Alanine--tRNA ligase from Staphylothermus marinus (strain ATCC 43588 / DSM 3639 / JCM 9404 / F1).